A 395-amino-acid chain; its full sequence is S-adenosylmethionine synthase (395 aa).

His18 lines the ATP pocket. Asp20 serves as a coordination point for Mg(2+). Glu46 lines the K(+) pocket. L-methionine contacts are provided by Glu59 and Gln103. Residues 103–113 are flexible loop; sequence QSADIAVGVDS. ATP contacts are provided by residues 170–172, Asp244, 250–251, Ala267, and Lys271; these read DAK and RK. Residue Asp244 coordinates L-methionine. Lys275 provides a ligand contact to L-methionine.

It belongs to the AdoMet synthase family. As to quaternary structure, homotetramer; dimer of dimers. Requires Mg(2+) as cofactor. K(+) serves as cofactor.

It localises to the cytoplasm. It catalyses the reaction L-methionine + ATP + H2O = S-adenosyl-L-methionine + phosphate + diphosphate. It participates in amino-acid biosynthesis; S-adenosyl-L-methionine biosynthesis; S-adenosyl-L-methionine from L-methionine: step 1/1. In terms of biological role, catalyzes the formation of S-adenosylmethionine (AdoMet) from methionine and ATP. The overall synthetic reaction is composed of two sequential steps, AdoMet formation and the subsequent tripolyphosphate hydrolysis which occurs prior to release of AdoMet from the enzyme. The sequence is that of S-adenosylmethionine synthase from Gluconacetobacter diazotrophicus (strain ATCC 49037 / DSM 5601 / CCUG 37298 / CIP 103539 / LMG 7603 / PAl5).